Reading from the N-terminus, the 245-residue chain is MGKRILVQRRGRGGSQFRSPSWRREGPVRYPPLGTAGRGYVVDIIHVPGLNAPVAKIRLENGLEFLNYAAEGLYVGQEIEIGEAASPKTGNVVVLGKAPEGTMVFNVEKRPGDGGKFARSGGTYAVVVGQKPEENKTIVRLPSGRTMEVDARGRATVGLVAGGGRIEKPMVKAGKKYYRARAKAWKYPLVRGKAMSPYAHPHGGGSHQKGGTPVSKTAPPGQKVGFIGSRCTGRGCVRARAQQKQ.

The disordered stretch occupies residues 196 to 226 (SPYAHPHGGGSHQKGGTPVSKTAPPGQKVGF).

This sequence belongs to the universal ribosomal protein uL2 family. Part of the 50S ribosomal subunit. Forms a bridge to the 30S subunit in the 70S ribosome.

Functionally, one of the primary rRNA binding proteins. Required for association of the 30S and 50S subunits to form the 70S ribosome, for tRNA binding and peptide bond formation. It has been suggested to have peptidyltransferase activity; this is somewhat controversial. Makes several contacts with the 16S rRNA in the 70S ribosome. This chain is Large ribosomal subunit protein uL2, found in Pyrobaculum neutrophilum (strain DSM 2338 / JCM 9278 / NBRC 100436 / V24Sta) (Thermoproteus neutrophilus).